A 100-amino-acid chain; its full sequence is Small ribosomal subunit protein uS14c (100 aa).

It belongs to the universal ribosomal protein uS14 family. In terms of assembly, part of the 30S ribosomal subunit.

Its subcellular location is the plastid. The protein resides in the chloroplast. In terms of biological role, binds 16S rRNA, required for the assembly of 30S particles. In Oenothera argillicola (Appalachian evening primrose), this protein is Small ribosomal subunit protein uS14c.